We begin with the raw amino-acid sequence, 34 residues long: ACSGRGSRCPPQCCMGLRCGRGNPQKCIGAHEDV.

3 disulfide bridges follow: Cys-2–Cys-14, Cys-9–Cys-19, and Cys-13–Cys-27. Pro-10 and Pro-11 each carry 4-hydroxyproline. Glu-32 bears the 4-carboxyglutamate mark.

In terms of tissue distribution, expressed by the venom duct.

Its subcellular location is the secreted. Mu-conotoxins block voltage-gated sodium channels (Nav). No effect was observed upon injections into mice and goldfish (25 ug). The sequence is that of Mu-conotoxin GS from Conus geographus (Geography cone).